A 625-amino-acid chain; its full sequence is Alpha-1,3-galactosidase A (625 aa).

The N-terminal stretch at 1–32 is a signal peptide; it reads MAHGCSGGAMSRFVFLGVALALLGGATSPAAA. PbH1 repeat units lie at residues 342-364, 460-482, 483-505, 516-537, and 573-611; these read KGKVSITRSLFDGPHDDPINIHG, TPSVVISGNVFRNVPTRGILVTT, RKPVLITGNRFDGMSMASIYVSA, VADLTIRGNSFTRPSGPVIFVE, and VGGFAFTGNTVRRLDGADHPPYTSPLFVFHGSSGIRIAR.

Belongs to the glycosyl hydrolase 110 family. A subfamily.

It carries out the reaction Hydrolysis of terminal, non-reducing branched (1-&gt;3)-alpha-D-galactosidic residues, producing free D-galactose.. The enzyme catalyses Hydrolysis of terminal, non-reducing alpha-D-galactose residues in alpha-D-galactosides, including galactose oligosaccharides, galactomannans and galactolipids.. Its function is as follows. Alpha-galactosidase that specifically removes branched alpha-1,3-linked galactose residues present in blood group B antigens. Has no activity toward linear alpha-1,3-linked galactose residues. This is Alpha-1,3-galactosidase A (glaA) from Streptomyces avermitilis (strain ATCC 31267 / DSM 46492 / JCM 5070 / NBRC 14893 / NCIMB 12804 / NRRL 8165 / MA-4680).